The chain runs to 430 residues: Enolase (430 aa).

Glutamine 165 serves as a coordination point for (2R)-2-phosphoglycerate. Glutamate 207 functions as the Proton donor in the catalytic mechanism. Mg(2+) contacts are provided by aspartate 244, glutamate 287, and aspartate 314. (2R)-2-phosphoglycerate is bound by residues lysine 339, arginine 368, serine 369, and lysine 390. Catalysis depends on lysine 339, which acts as the Proton acceptor.

This sequence belongs to the enolase family. In terms of assembly, component of the RNA degradosome, a multiprotein complex involved in RNA processing and mRNA degradation. Mg(2+) serves as cofactor.

The protein localises to the cytoplasm. It localises to the secreted. Its subcellular location is the cell surface. It catalyses the reaction (2R)-2-phosphoglycerate = phosphoenolpyruvate + H2O. It functions in the pathway carbohydrate degradation; glycolysis; pyruvate from D-glyceraldehyde 3-phosphate: step 4/5. In terms of biological role, catalyzes the reversible conversion of 2-phosphoglycerate (2-PG) into phosphoenolpyruvate (PEP). It is essential for the degradation of carbohydrates via glycolysis. The chain is Enolase from Stenotrophomonas maltophilia (strain R551-3).